The chain runs to 1455 residues: DNA-directed RNA polymerase subunit beta (1455 aa).

This sequence belongs to the RNA polymerase beta chain family. In terms of assembly, the RNAP catalytic core consists of 2 alpha, 1 beta, 1 beta' and 1 omega subunit. When a sigma factor is associated with the core the holoenzyme is formed, which can initiate transcription.

The catalysed reaction is RNA(n) + a ribonucleoside 5'-triphosphate = RNA(n+1) + diphosphate. Its function is as follows. DNA-dependent RNA polymerase catalyzes the transcription of DNA into RNA using the four ribonucleoside triphosphates as substrates. This is DNA-directed RNA polymerase subunit beta from Rhizorhabdus wittichii (strain DSM 6014 / CCUG 31198 / JCM 15750 / NBRC 105917 / EY 4224 / RW1) (Sphingomonas wittichii).